A 188-amino-acid polypeptide reads, in one-letter code: uncharacterized protein (188 aa).

3 helical membrane-spanning segments follow: residues 6–26, 43–63, and 110–130; these read MIVFMLLMVEIVSFVILSLPL, FAGRVKHVLKITIICILILFA, and ALFLSLVVNRYYLALEAMIAA.

The protein resides in the membrane. This is an uncharacterized protein from Schizosaccharomyces pombe (strain 972 / ATCC 24843) (Fission yeast).